The sequence spans 280 residues: Hydrolase MT0498 (280 aa).

The 251-residue stretch at 1–251 (MRIALAQIRS…PQLLVADIDV (251 aa)) folds into the CN hydrolase domain. Glu-40 functions as the Proton acceptor in the catalytic mechanism. The active-site Proton donor is the Lys-110. The Nucleophile role is filled by Cys-146.

This sequence belongs to the carbon-nitrogen hydrolase superfamily. NIT1/NIT2 family.

This Mycobacterium tuberculosis (strain CDC 1551 / Oshkosh) protein is Hydrolase MT0498.